The sequence spans 72 residues: Protein CYSTEINE-RICH TRANSMEMBRANE MODULE 9 (72 aa).

The span at 1–22 (MNPSEQNHLSVEKPSQTSSGPY) shows a compositional bias: polar residues. The tract at residues 1 to 46 (MNPSEQNHLSVEKPSQTSSGPYTSPPPIGYPTRDAMVGDPPAAAVE) is disordered. The helical transmembrane segment at 49–65 (SKGDGFWKGCCAAICCC) threads the bilayer.

This sequence belongs to the CYSTM1 family. As to quaternary structure, heterodimers. Interacts with WIH1/CYSTM13. In terms of tissue distribution, mostly expressed in roots and flowers and, to a lower extent, in stems, siliques and leaves.

The protein resides in the cell membrane. Its subcellular location is the nucleus. Its function is as follows. Involved in resistance to abiotic stress. The protein is Protein CYSTEINE-RICH TRANSMEMBRANE MODULE 9 of Arabidopsis thaliana (Mouse-ear cress).